Consider the following 666-residue polypeptide: ATP-dependent RNA helicase DDX51 (666 aa).

An N-acetylalanine modification is found at Ala-2. A disordered region spans residues 9 to 152 (YPGPDAAAAA…AAPDGPALEE (144 aa)). The segment covering 10–28 (PGPDAAAAAGPEGAEAGAH) has biased composition (low complexity). Over residues 33 to 48 (ALLERLQSRARERQQQ) the composition is skewed to basic and acidic residues. Residues 49 to 58 (REPAQTEAAA) are compositionally biased toward low complexity. Residues 65–75 (RRRRRPRRRRR) show a composition bias toward basic residues. Phosphoserine is present on residues Ser-83 and Ser-103. Over residues 97–108 (EDAGAESNEEAP) the composition is skewed to acidic residues. A Q motif motif is present at residues 221 to 229 (YFPVQAAVI). Positions 243–452 (GRGGYRPSDL…QLGLHQPRLF (210 aa)) constitute a Helicase ATP-binding domain. 256 to 263 (APTGSGKT) is a binding site for ATP. The short motif at 371-374 (DEAD) is the DEAD box element. The Helicase C-terminal domain maps to 494–640 (VVLHLVLEMG…RHELSSKLLQ (147 aa)).

Belongs to the DEAD box helicase family. DDX51/DBP6 subfamily.

It is found in the nucleus. It localises to the nucleolus. The enzyme catalyses ATP + H2O = ADP + phosphate + H(+). Functionally, ATP-binding RNA helicase involved in the biogenesis of 60S ribosomal subunits. The protein is ATP-dependent RNA helicase DDX51 (DDX51) of Homo sapiens (Human).